The sequence spans 380 residues: Opsin-2 (380 aa).

At 1-51 (MVNTTDFYPVPAAMAYESSVGLPLLGWNVPTEHLDLVHPHWRSFQVPNKYW) the chain is on the extracellular side. N-linked (GlcNAc...) asparagine glycosylation occurs at N3. A helical transmembrane segment spans residues 52–76 (HFGLAFVYFMLMCMSSLGNGIVLWI). Topologically, residues 77-88 (YATTKSIRTPSN) are cytoplasmic. A helical membrane pass occupies residues 89 to 115 (MFIVNLALFDVLMLLEMPMLVVSSLFY). Topologically, residues 116–128 (QRPVGWELGCDIY) are extracellular. A disulfide bridge links C125 with C202. The chain crosses the membrane as a helical span at residues 129 to 148 (AALGSVAGIGSAINNAAIAF). At 149-166 (DRYRTISCPIDGRLTQGQ) the chain is on the cytoplasmic side. A helical membrane pass occupies residues 167 to 191 (VLALIAGTWVWTLPFTLMPLLRIWS). Over 192–215 (RFTAEGFLTTCSFDYLTDDEDTKV) the chain is Extracellular. The chain crosses the membrane as a helical span at residues 216-243 (FVGCIFAWSYAFPLCLICCFYYRLIGAV). Over 244–279 (REHEKMLRDQAKKMNVKSLQSNADTEAQSAEIRIAK) the chain is Cytoplasmic. A helical membrane pass occupies residues 280 to 303 (VALTIFFLFLCSWTPYAVVAMIGA). Residues 304–311 (FGNRAALT) are Extracellular-facing. The chain crosses the membrane as a helical span at residues 312-336 (PLSTMIPAVTAKIVSCIDPWVYAIN). K323 is modified (N6-(retinylidene)lysine). Topologically, residues 337–380 (HPRFRAEVQKRMKWLHLGEDARSSKSDTSSTATDRTVGNVSASA) are cytoplasmic. Residues 358 to 380 (RSSKSDTSSTATDRTVGNVSASA) are disordered. Low complexity predominate over residues 362–372 (SDTSSTATDRT).

It belongs to the G-protein coupled receptor 1 family. Opsin subfamily. Post-translationally, phosphorylated on some or all of the serine and threonine residues present in the C-terminal region.

The protein localises to the membrane. In terms of biological role, visual pigments are the light-absorbing molecules that mediate vision. They consist of an apoprotein, opsin, covalently linked to cis-retinal. The protein is Opsin-2 (Lo2) of Schistocerca gregaria (Desert locust).